The primary structure comprises 288 residues: Stress response protein YhaX (288 aa).

The sequence is that of Stress response protein YhaX (yhaX) from Bacillus subtilis (strain 168).